The chain runs to 3418 residues: MPIGSKERPTFFEIFKTRCNKADLGPISLNWFEELSSEAPPYNSEPAEESEHKNNNYEPNLFKTPQRKPSYNQLASTPIIFKEQGLTLPLYQSPVKELDKFKLDLGRNVPNSRHKSLRTVKTKMDQADDVSCPLLNSCLSESPVVLQCTHVTPQRDKSVVCGSLFHTPKFVKGRQTPKHISESLGAEVDPDMSWSSSLATPPTLSSTVLIVRNEEASETVFPHDTTANVKSYFSNHDESLKKNDRFIASVTDSENTNQREAASHGFGKTSGNSFKVNSCKDHIGKSMPNVLEDEVYETVVDTSEEDSFSLCFSKCRTKNLQKVRTSKTRKKIFHEANADECEKSKNQVKEKYSFVSEVEPNDTDPLDSNVANQKPFESGSDKISKEVVPSLACEWSQLTLSGLNGAQMEKIPLLHISSCDQNISEKDLLDTENKRKKDFLTSENSLPRISSLPKSEKPLNEETVVNKRDEEQHLESHTDCILAVKQAISGTSPVASSFQGIKKSIFRIRESPKETFNASFSGHMTDPNFKKETEASESGLEIHTVCSQKEDSLCPNLIDNGSWPATTTQNSVALKNAGLISTLKKKTNKFIYAIHDETSYKGKKIPKDQKSELINCSAQFEANAFEAPLTFANADSGLLHSSVKRSCSQNDSEEPTLSLTSSFGTILRKCSRNETCSNNTVISQDLDYKEAKCNKEKLQLFITPEADSLSCLQEGQCENDPKSKKVSDIKEEVLAAACHPVQHSKVEYSDTDFQSQKSLLYDHENASTLILTPTSKDVLSNLVMISRGKESYKMSDKLKGNNYESDVELTKNIPMEKNQDVCALNENYKNVELLPPEKYMRVASPSRKVQFNQNTNLRVIQKNQEETTSISKITVNPDSEELFSDNENNFVFQVANERNNLALGNTKELHETDLTCVNEPIFKNSTMVLYGDTGDKQATQVSIKKDLVYVLAEENKNSVKQHIKMTLGQDLKSDISLNIDKIPEKNNDYMNKWAGLLGPISNHSFGGSFRTASNKEIKLSEHNIKKSKMFFKDIEEQYPTSLACVEIVNTLALDNQKKLSKPQSINTVSAHLQSSVVVSDCKNSHITPQMLFSKQDFNSNHNLTPSQKAEITELSTILEESGSQFEFTQFRKPSYILQKSTFEVPENQMTILKTTSEECRDADLHVIMNAPSIGQVDSSKQFEGTVEIKRKFAGLLKNDCNKSASGYLTDENEVGFRGFYSAHGTKLNVSTEALQKAVKLFSDIENISEETSAEVHPISLSSSKCHDSVVSMFKIENHNDKTVSEKNNKCQLILQNNIEMTTGTFVEEITENYKRNTENEDNKYTAASRNSHNLEFDGSDSSKNDTVCIHKDETDLLFTDQHNICLKLSGQFMKEGNTQIKEDLSDLTFLEVAKAQEACHGNTSNKEQLTATKTEQNIKDFETSDTFFQTASGKNISVAKESFNKIVNFFDQKPEELHNFSLNSELHSDIRKNKMDILSYEETDIVKHKILKESVPVGTGNQLVTFQGQPERDEKIKEPTLLGFHTASGKKVKIAKESLDKVKNLFDEKEQGTSEITSFSHQWAKTLKYREACKDLELACETIEITAAPKCKEMQNSLNNDKNLVSIETVVPPKLLSDNLCRQTENLKTSKSIFLKVKVHENVEKETAKSPATCYTNQSPYSVIENSALAFYTSCSRKTSVSQTSLLEAKKWLREGIFDGQPERINTADYVGNYLYENNSNSTIAENDKNHLSEKQDTYLSNSSMSNSYSYHSDEVYNDSGYLSKNKLDSGIEPVLKNVEDQKNTSFSKVISNVKDANAYPQTVNEDICVEELVTSSSPCKNKNAAIKLSISNSNNFEVGPPAFRIASGKIVCVSHETIKKVKDIFTDSFSKVIKENNENKSKICQTKIMAGCYEALDDSEDILHNSLDNDECSTHSHKVFADIQSEEILQHNQNMSGLEKVSKISPCDVSLETSDICKCSIGKLHKSVSSANTCGIFSTASGKSVQVSDASLQNARQVFSEIEDSTKQVFSKVLFKSNEHSDQLTREENTAIRTPEHLISQKGFSYNVVNSSAFSGFSTASGKQVSILESSLHKVKGVLEEFDLIRTEHSLHYSPTSRQNVSKILPRVDKRNPEHCVNSEMEKTCSKEFKLSNNLNVEGGSSENNHSIKVSPYLSQFQQDKQQLVLGTKVSLVENIHVLGKEQASPKNVKMEIGKTETFSDVPVKTNIEVCSTYSKDSENYFETEAVEIAKAFMEDDELTDSKLPSHATHSLFTCPENEEMVLSNSRIGKRRGEPLILVGEPSIKRNLLNEFDRIIENQEKSLKASKSTPDGTIKDRRLFMHHVSLEPITCVPFRTTKERQEIQNPNFTAPGQEFLSKSHLYEHLTLEKSSSNLAVSGHPFYQVSATRNEKMRHLITTGRPTKVFVPPFKTKSHFHRVEQCVRNINLEENRQKQNIDGHGSDDSKNKINDNEIHQFNKNNSNQAVAVTFTKCEEEPLDLITSLQNARDIQDMRIKKKQRQRVFPQPGSLYLAKTSTLPRISLKAAVGGQVPSACSHKQLYTYGVSKHCIKINSKNAESFQFHTEDYFGKESLWTGKGIQLADGGWLIPSNDGKAGKEEFYRALCDTPGVDPKLISRIWVYNHYRWIIWKLAAMECAFPKEFANRCLSPERVLLQLKYRYDTEIDRSRRSAIKKIMERDDTAAKTLVLCVSDIISLSANISETSSNKTSSADTQKVAIIELTDGWYAVKAQLDPPLLAVLKNGRLTVGQKIILHGAELVGSPDACTPLEAPESLMLKISANSTRPARWYTKLGFFPDPRPFPLPLSSLFSDGGNVGCVDVIIQRAYPIQWMEKTSSGLYIFRNEREEEKEAAKYVEAQQKRLEALFTKIQEEFEEHEENTTKPYLPSRALTRQQVRALQDGAELYEAVKNAADPAYLEGYFSEEQLRALNNHRQMLNDKKQAQIQLEIRKAMESAEQKEQGLSRDVTTVWKLRIVSYSKKEKDSVILSIWRPSSDLYSLLTEGKRYRIYHLATSKSKSKSERANIQLAATKKTQYQQLPVSDEILFQIYQPREPLHFSKFLDPDFQPSCSEVDLIGFVVSVVKKTGLAPFVYLSDECYNLLAIKFWIDLNEDIIKPHMLIAASNLQWRPESKSGLLTLFAGDFSVFSASPKEGHFQETFNKMKNTVENIDILCNEAENKLMHILHANDPKWSTPTKDCTSGPYTAQIIPGTGNKLLMSSPNCEIYYQSPLSLCMAKRKSVSTPVSAQMTSKSCKGEKEIDDQKNCKKRRALDFLSRLPLPPPVSPICTFVSPAAQKAFQPPRSCGTKYETPIKKKELNSPQMTPFKKFNEISLLESNSIADEELALINTQALLSGSTGEKQFISVSESTRTAPTSSEDYLRLKRRCTTSLIKEQESSQASTEECEKNKQDTITTKKYI.

The interaction with PALB2 stretch occupies residues 1–40 (MPIGSKERPTFFEIFKTRCNKADLGPISLNWFEELSSEAP). Residues 37 to 68 (SEAPPYNSEPAEESEHKNNNYEPNLFKTPQRK) are disordered. S70 bears the Phosphoserine mark. The interval 358-381 (VEPNDTDPLDSNVANQKPFESGSD) is disordered. Residues S445, S492, and S755 each carry the phosphoserine modification. The segment at 639-1000 (LHSSVKRSCS…NKWAGLLGPI (362 aa)) is interaction with NPM1. BRCA2 repeat units follow at residues 1002–1036 (NHSFGGSFRTASNKEIKLSEHNIKKSKMFFKDIEE), 1212–1246 (NEVGFRGFYSAHGTKLNVSTEALQKAVKLFSDIEN), 1421–1455 (FETSDTFFQTASGKNISVAKESFNKIVNFFDQKPE), 1517–1551 (KEPTLLGFHTASGKKVKIAKESLDKVKNLFDEKEQ), 1664–1698 (IENSALAFYTSCSRKTSVSQTSLLEAKKWLREGIF), and 1837–1871 (FEVGPPAFRIASGKIVCVSHETIKKVKDIFTDSFS). Residues 1003–2082 (HSFGGSFRTA…LHKVKGVLEE (1080 aa)) form an interaction with RAD51 region. The interval 1338–1781 (GSDSSKNDTV…IEPVLKNVED (444 aa)) is interaction with POLH. Residues 1410-1595 (TATKTEQNIK…TAAPKCKEMQ (186 aa)) are required for stimulation of POLH DNA polymerization activity. S1970 carries the post-translational modification Phosphoserine. The BRCA2 7 repeat unit spans residues 1971 to 2005 (SANTCGIFSTASGKSVQVSDASLQNARQVFSEIED). T2035 is subject to Phosphothreonine. The BRCA2 8 repeat unit spans residues 2051-2085 (NSSAFSGFSTASGKQVSILESSLHKVKGVLEEFDL). S2095 is modified (phosphoserine). Residues 2270–2337 (GKRRGEPLIL…EPITCVPFRT (68 aa)) are interaction with HSF2BP. The tract at residues 2350–2545 (TAPGQEFLSK…SHKQLYTYGV (196 aa)) is interaction with FANCD2. Residues 2430 to 2450 (ENRQKQNIDGHGSDDSKNKIN) form a disordered region. The interaction with SEM1 stretch occupies residues 2481 to 2832 (ITSLQNARDI…QRAYPIQWME (352 aa)). Residues 2682–2698 (AAKTLVLCVSDIISLSA) carry the Nuclear export signal; masked by interaction with SEM1 motif. Phosphoserine; by CDK1 and CDK2 is present on S3291. Phosphoserine is present on S3319. A Phosphothreonine; by CHEK1 and CHEK2 modification is found at T3387. Residues 3393 to 3418 (EQESSQASTEECEKNKQDTITTKKYI) form a disordered region.

As to quaternary structure, monomer and dimer. Interacts with RAD51; regulates RAD51 recruitment and function at sites of DNA repair. Interacts with WDR16, USP11, DMC1, ROCK2 and NPM1. Interacts with SEM1; the interaction masks a nuclear export signal in BRCA2. Interacts with both nonubiquitinated and monoubiquitinated FANCD2; this complex also includes XRCC3 and phosphorylated FANCG. Part of a BRCA complex containing BRCA1, BRCA2 and PALB2. Component of the homologous recombination repair (HR) complex composed of ERCC5/XPG, BRCA2, PALB2, DSS1 and RAD51. Within the complex, interacts with ERCC5/XPG and PALB2. Interacts directly with PALB2 which may serve as a scaffold for a HR complex containing PALB2, BRCA2, RAD51C, RAD51 and XRCC3. Interacts with BRCA1 only in the presence of PALB2 which serves as the bridging protein. Interacts with POLH; the interaction is direct. Interacts with the TREX-2 complex subunits PCID2 and SEM1. Interacts with HSF2BP and BRME1; the interaction with HSF2BP is direct and allows the formation of a ternary complex. The complex BRME1:HSF2BP:BRCA2 interacts with SPATA22, MEIOB and RAD51. Post-translationally, phosphorylated by ATM upon irradiation-induced DNA damage. Phosphorylation by CHEK1 and CHEK2 regulates interaction with RAD51. Phosphorylation at Ser-3291 by CDK1 and CDK2 is low in S phase when recombination is active, but increases as cells progress towards mitosis; this phosphorylation prevents homologous recombination-dependent repair during S phase and G2 by inhibiting RAD51 binding. In terms of processing, ubiquitinated in the absence of DNA damage; this does not lead to proteasomal degradation. In contrast, ubiquitination in response to DNA damage leads to proteasomal degradation. In terms of tissue distribution, highest levels of expression in breast and thymus, with slightly lower levels in lung, ovary and spleen.

It localises to the nucleus. Its subcellular location is the cytoplasm. It is found in the cytoskeleton. The protein resides in the microtubule organizing center. The protein localises to the centrosome. Involved in double-strand break repair and/or homologous recombination. Binds RAD51 and potentiates recombinational DNA repair by promoting assembly of RAD51 onto single-stranded DNA (ssDNA). Acts by targeting RAD51 to ssDNA over double-stranded DNA, enabling RAD51 to displace replication protein-A (RPA) from ssDNA and stabilizing RAD51-ssDNA filaments by blocking ATP hydrolysis. Part of a PALB2-scaffolded HR complex containing RAD51C and which is thought to play a role in DNA repair by HR. May participate in S phase checkpoint activation. Binds selectively to ssDNA, and to ssDNA in tailed duplexes and replication fork structures. May play a role in the extension step after strand invasion at replication-dependent DNA double-strand breaks; together with PALB2 is involved in both POLH localization at collapsed replication forks and DNA polymerization activity. In concert with NPM1, regulates centrosome duplication. Interacts with the TREX-2 complex (transcription and export complex 2) subunits PCID2 and SEM1, and is required to prevent R-loop-associated DNA damage and thus transcription-associated genomic instability. Silencing of BRCA2 promotes R-loop accumulation at actively transcribed genes in replicating and non-replicating cells, suggesting that BRCA2 mediates the control of R-loop associated genomic instability, independently of its known role in homologous recombination. In Homo sapiens (Human), this protein is Breast cancer type 2 susceptibility protein.